Reading from the N-terminus, the 2190-residue chain is Integrator complex subunit 1 (2190 aa).

Residues 1–61 are disordered; sequence MNRAKPTTVR…GLPSERKRDA (61 aa). Ser13 bears the Phosphoserine mark. Over residues 34–44 the composition is skewed to polar residues; it reads GQANESKTAST. Lys47 is subject to N6-acetyllysine. A Phosphothreonine modification is found at Thr83. 3 positions are modified to phosphoserine: Ser87, Ser307, and Ser924. The segment at 922 to 945 is disordered; that stretch reads AASGEEDDEGESKEQKAKKRQRQQ. Acidic residues predominate over residues 923–932; sequence ASGEEDDEGE. Residues 1159-1179 traverse the membrane as a helical segment; it reads TATMHILVVHAMVILLTLGPP. The tract at residues 1311-1334 is disordered; the sequence is SLPPRRDSTEAPKPKSSPEQPIGQ. The segment covering 1314 to 1323 has biased composition (basic and acidic residues); it reads PRRDSTEAPK. A phosphoserine mark is found at Ser1318, Ser1326, Ser1327, and Ser1395.

It belongs to the Integrator subunit 1 family. As to quaternary structure, component of the Integrator complex, composed of core subunits INTS1, INTS2, INTS3, INTS4, INTS5, INTS6, INTS7, INTS8, INTS9/RC74, INTS10, INTS11/CPSF3L, INTS12, INTS13, INTS14 and INTS15. The core complex associates with protein phosphatase 2A subunits PPP2CA and PPP2R1A, to form the Integrator-PP2A (INTAC) complex. Interacts with ESRRB, ESRRB is not a core component of the Integrator complex and this association is a bridge for the interaction with the multiprotein complex Integrator; attracts the transcriptional machinery.

The protein resides in the nucleus. The protein localises to the nucleus membrane. Component of the integrator complex, a multiprotein complex that terminates RNA polymerase II (Pol II) transcription in the promoter-proximal region of genes. The integrator complex provides a quality checkpoint during transcription elongation by driving premature transcription termination of transcripts that are unfavorably configured for transcriptional elongation: the complex terminates transcription by (1) catalyzing dephosphorylation of the C-terminal domain (CTD) of Pol II subunit POLR2A/RPB1 and SUPT5H/SPT5, (2) degrading the exiting nascent RNA transcript via endonuclease activity and (3) promoting the release of Pol II from bound DNA. The integrator complex is also involved in terminating the synthesis of non-coding Pol II transcripts, such as enhancer RNAs (eRNAs), small nuclear RNAs (snRNAs), telomerase RNAs and long non-coding RNAs (lncRNAs). Within the integrator complex, INTS1 is involved in the post-termination step: INTS1 displaces INTS3 and the SOSS factors, allowing the integrator complex to return to the closed conformation, ready to bind to the paused elongation complex for another termination cycle. Mediates recruitment of cytoplasmic dynein to the nuclear envelope, probably as component of the integrator complex. The polypeptide is Integrator complex subunit 1 (Homo sapiens (Human)).